Reading from the N-terminus, the 100-residue chain is uncharacterized protein (100 aa).

Lys98 is covalently cross-linked (Isoglutamyl lysine isopeptide (Lys-Gln) (interchain with Q-Cter in protein Pup)).

This is an uncharacterized protein from Mycobacterium tuberculosis (strain CDC 1551 / Oshkosh).